We begin with the raw amino-acid sequence, 362 residues long: Adenosine deaminase (362 aa).

Zn(2+)-binding residues include His19 and His21. Positions 21, 23, and 181 each coordinate substrate. A Zn(2+)-binding site is contributed by His208. The Proton donor role is filled by Glu211. Asp300 contributes to the Zn(2+) binding site.

This sequence belongs to the metallo-dependent hydrolases superfamily. Adenosine and AMP deaminases family. Adenosine deaminase subfamily. It depends on Zn(2+) as a cofactor.

It carries out the reaction adenosine + H2O + H(+) = inosine + NH4(+). It catalyses the reaction 2'-deoxyadenosine + H2O + H(+) = 2'-deoxyinosine + NH4(+). Its function is as follows. Catalyzes the hydrolytic deamination of adenosine and 2-deoxyadenosine. The chain is Adenosine deaminase from Mycobacteroides abscessus (strain ATCC 19977 / DSM 44196 / CCUG 20993 / CIP 104536 / JCM 13569 / NCTC 13031 / TMC 1543 / L948) (Mycobacterium abscessus).